A 62-amino-acid polypeptide reads, in one-letter code: MKTIVILFVLALVFCTLEMGMVEAGFGCPFNQGKCHRHCRSIRRRGGYCDGFLKQRCVCYRK.

A signal peptide spans 1–24 (MKTIVILFVLALVFCTLEMGMVEA). 3 disulfides stabilise this stretch: cysteine 28-cysteine 49, cysteine 35-cysteine 57, and cysteine 39-cysteine 59.

It belongs to the invertebrate defensin family. Type 2 subfamily. In terms of tissue distribution, low expression in both venom and non-venom glands (hemolymph).

It localises to the secreted. Functionally, antibacterial peptide active against Gram-positive bacteria (including S.aureus ATCC25923 (MIC=2.5 uM), M.luteus AB93113 (MIC=2.5 uM), and the antibiotic-resistant S.epidermidis PRSE P1389 (MIC=1.25 uM)), but not against Gram-negative bacteria (including E.coli and P.aeruginosa). Also blocks the currents of Kv1.1/KCNA1 (57% inhibition), Kv1.2/KCNA2 (27.5% inhibition), Kv1.3/KCNA3 (IC(50)=23.4 nM, 84.3% inhibition), KCa3.1/KCNN4/IK (15% inhibition), KCa2.3/KCNN3/SK3 (87.5% inhibition) and Kv11.1/KCNH2/ERG1 (30.4% inhibition) channels (tested at 1 uM). It inhibits potassium channel current by interacting with the pore region. The chain is Defensin BmKDfsin3 from Olivierus martensii (Manchurian scorpion).